The sequence spans 562 residues: Oxygen-dependent choline dehydrogenase (562 aa).

Aspartate 4–glutamate 33 contributes to the FAD binding site. Residue histidine 473 is the Proton acceptor of the active site.

Belongs to the GMC oxidoreductase family. FAD is required as a cofactor.

Its subcellular location is the cell membrane. It catalyses the reaction choline + A = betaine aldehyde + AH2. The enzyme catalyses betaine aldehyde + NAD(+) + H2O = glycine betaine + NADH + 2 H(+). It functions in the pathway amine and polyamine biosynthesis; betaine biosynthesis via choline pathway; betaine aldehyde from choline (cytochrome c reductase route): step 1/1. In terms of biological role, involved in the biosynthesis of the osmoprotectant glycine betaine. Catalyzes the oxidation of choline to betaine aldehyde and betaine aldehyde to glycine betaine at the same rate. This is Oxygen-dependent choline dehydrogenase from Escherichia coli O157:H7.